The following is a 359-amino-acid chain: 4-galactosyl-N-acetylglucosaminide 3-alpha-L-fucosyltransferase 9 (359 aa).

The Cytoplasmic portion of the chain corresponds to 1–11 (MTSASKGILRP). A helical; Signal-anchor for type II membrane protein membrane pass occupies residues 12 to 32 (FLIVCIILACSMVCLFIYIKP). Over 33–359 (TNSWIFSPME…VGNLEKWFWN (327 aa)) the chain is Lumenal. Asparagine 62 carries an N-linked (GlcNAc...) asparagine glycan. The acceptor-binding stretch occupies residues 63–168 (ETTILIWVWP…RRDSDIQVPY (106 aa)). Residue glutamine 75 coordinates a beta-D-galactosyl-(1-&gt;4)-N-acetyl-beta-D-glucosaminyl derivative. 3 cysteine pairs are disulfide-bonded: cysteine 82/cysteine 335, cysteine 91/cysteine 338, and cysteine 190/cysteine 238. The N-linked (GlcNAc...) asparagine glycan is linked to asparagine 101. Glutamate 137 contributes to the a beta-D-galactosyl-(1-&gt;4)-N-acetyl-beta-D-glucosaminyl derivative binding site. Glutamate 137 serves as the catalytic Nucleophile. Glutamate 137 is a binding site for GDP-beta-L-fucose. A glycan (N-linked (GlcNAc...) asparagine) is linked at asparagine 153. Tyrosine 168, valine 192, serine 194, asparagine 195, arginine 202, valine 226, tyrosine 241, asparagine 246, tyrosine 252, glutamate 255, and lysine 256 together coordinate GDP-beta-L-fucose. Residues 169-326 (GFLTVSTNPF…NWRKDFTVNL (158 aa)) are donor-binding. The acceptor-binding stretch occupies residues 327 to 359 (PRFWESHACLACDHVKRHQEYKSVGNLEKWFWN).

It belongs to the glycosyltransferase 10 family. In terms of assembly, homodimer. N-glycosylated with complex-type N-glycans.

It localises to the golgi apparatus. Its subcellular location is the trans-Golgi network membrane. The protein resides in the golgi apparatus membrane. It catalyses the reaction a beta-D-galactosyl-(1-&gt;4)-N-acetyl-beta-D-glucosaminyl derivative + GDP-beta-L-fucose = a beta-D-galactosyl-(1-&gt;4)-[alpha-L-fucosyl-(1-&gt;3)]-N-acetyl-beta-D-glucosaminyl derivative + GDP + H(+). The enzyme catalyses an alpha-Neu5Ac-(2-&gt;3)-beta-D-Gal-(1-&gt;4)-beta-D-GlcNAc-(1-&gt;3)-beta-D-Gal-(1-&gt;4)-beta-D-GlcNAc derivative + GDP-beta-L-fucose = an alpha-Neu5Ac-(2-&gt;3)-beta-D-Gal-(1-&gt;4)-beta-D-GlcNAc-(1-&gt;3)-beta-D-Gal-(1-&gt;4)-[alpha-L-Fuc-(1-&gt;3)]-beta-D-GlcNAc derivative + GDP + H(+). It carries out the reaction alpha-N-glycoloylneuraminosyl-(2-&gt;3)-beta-D-galactosyl-(1-&gt;4)-N-acetyl-beta-D-glucosaminyl-(1-&gt;3)-beta-D-galactosyl-(1-&gt;4)-N-acetyl-beta-D-glucosaminyl-(1-&gt;3)-beta-D-galactosyl-(1-&gt;4)-beta-D-glucosyl-(1&lt;-&gt;1')-ceramide + GDP-beta-L-fucose = alpha-N-glycoloylneuraminosyl-(2-&gt;3)-beta-D-galactosyl-(1-&gt;4)-N-acetyl-beta-D-glucosaminyl-(1-&gt;3)-beta-D-galactosyl-(1-&gt;4)-[alpha-L-fucosyl-(1-&gt;3)]-N-acetyl-beta-D-glucosaminyl-(1-&gt;3)-beta-D-galactosyl-(1-&gt;4)-beta-D-glucosyl-(1&lt;-&gt;1')-ceramide + GDP + H(+). The catalysed reaction is alpha-D-galactosyl-(1-&gt;3)-beta-D-galactosyl-(1-&gt;4)-N-acetyl-beta-D-glucosaminyl-(1-&gt;3)-beta-D-galactosyl-(1-&gt;4)-beta-D-glucosyl-(1&lt;-&gt;1')-ceramide + GDP-beta-L-fucose = a neolactoside IV(3)-alpha-Gal,III(3)-alpha-Fuc-nLc4Cer + GDP + H(+). It catalyses the reaction a neolactoside nLc4Cer + GDP-beta-L-fucose = a neolactoside III(3)-alpha-Fuc-nLc4Cer + GDP + H(+). The enzyme catalyses an N-acetyl-alpha-neuraminyl-(2-&gt;3)-beta-D-galactosyl-(1-&gt;4)-N-acetyl-beta-D-glucosaminyl derivative + GDP-beta-L-fucose = an alpha-Neu5Ac-(2-&gt;3)-beta-D-Gal-(1-&gt;4)-[alpha-L-Fuc-(1-&gt;3)]-beta-D-GlcNAc derivative + GDP + H(+). It carries out the reaction beta-D-Gal-(1-&gt;4)-beta-D-GlcNAc-(1-&gt;3)-beta-D-Gal-(1-&gt;4)-D-Glc + GDP-beta-L-fucose = beta-D-Gal-(1-&gt;4)-[alpha-L-Fuc-(1-&gt;3)]-beta-D-GlcNAc-(1-&gt;3)-beta-D-Gal-(1-&gt;4)-D-Glc + GDP + H(+). The catalysed reaction is an alpha-L-Fuc-(1-&gt;2)-beta-D-Gal-(1-&gt;4)-beta-D-GlcNAc derivative + GDP-beta-L-fucose = an alpha-L-Fuc-(1-&gt;2)-beta-D-Gal-(1-&gt;4)-[alpha-L-Fuc-(1-&gt;3)]-beta-D-GlcNAc derivative + GDP + H(+). Its pathway is protein modification; protein glycosylation. It functions in the pathway glycolipid biosynthesis. Its activity is regulated as follows. Activated by Mn2+. Catalyzes alpha(1-&gt;3) linkage of fucosyl moiety transferred from GDP-beta-L-fucose to N-acetyl glucosamine (GlcNAc) within type 2 lactosamine (LacNAc, beta-D-Gal-(1-&gt;4)-beta-D-GlcNAc-) glycan attached to glycolipids and N- or O-linked glycoproteins. Fucosylates distal type 2 LacNAc and its fucosylated (H-type 2 LacNAc) and sialylated (sialyl-type 2 LacNAc) derivatives to form Lewis x (Lex) (CD15) and Lewis y (Ley) antigenic epitopes involved in cell adhesion and differentiation. Generates Lex epitopes in the brain, presumably playing a role in the maintenance of neuronal stemness and neurite outgrowth in progenitor neural cells. Fucosylates the internal type 2 LacNAc unit of the polylactosamine chain to form VIM-2 antigen that serves as recognition epitope for SELE. Can also modify milk oligosaccharides in particular type 2 tetrasaccharide LNnT. This is 4-galactosyl-N-acetylglucosaminide 3-alpha-L-fucosyltransferase 9 from Bos taurus (Bovine).